Here is a 320-residue protein sequence, read N- to C-terminus: HPr kinase/phosphorylase (320 aa).

Active-site residues include histidine 141 and lysine 162. 156–163 contributes to the ATP binding site; it reads GHSGLGKS. Serine 163 contacts Mg(2+). Aspartate 180 (proton acceptor; for phosphorylation activity. Proton donor; for dephosphorylation activity) is an active-site residue. Positions 204–213 are important for the catalytic mechanism of both phosphorylation and dephosphorylation; that stretch reads LEVRGLGILN. Position 205 (glutamate 205) interacts with Mg(2+). The active site involves arginine 248. Positions 269–274 are important for the catalytic mechanism of dephosphorylation; sequence PVAVGR.

This sequence belongs to the HPrK/P family. In terms of assembly, homohexamer. Requires Mg(2+) as cofactor.

The enzyme catalyses [HPr protein]-L-serine + ATP = [HPr protein]-O-phospho-L-serine + ADP + H(+). The catalysed reaction is [HPr protein]-O-phospho-L-serine + phosphate + H(+) = [HPr protein]-L-serine + diphosphate. In terms of biological role, catalyzes the ATP- as well as the pyrophosphate-dependent phosphorylation of a specific serine residue in HPr, a phosphocarrier protein of the phosphoenolpyruvate-dependent sugar phosphotransferase system (PTS). HprK/P also catalyzes the pyrophosphate-producing, inorganic phosphate-dependent dephosphorylation (phosphorolysis) of seryl-phosphorylated HPr (P-Ser-HPr). This Neisseria gonorrhoeae (strain ATCC 700825 / FA 1090) protein is HPr kinase/phosphorylase.